Consider the following 358-residue polypeptide: Phenylalanine--tRNA ligase alpha subunit (358 aa).

Residue glutamate 258 participates in Mg(2+) binding.

The protein belongs to the class-II aminoacyl-tRNA synthetase family. Phe-tRNA synthetase alpha subunit type 1 subfamily. In terms of assembly, tetramer of two alpha and two beta subunits. Mg(2+) is required as a cofactor.

The protein localises to the cytoplasm. It catalyses the reaction tRNA(Phe) + L-phenylalanine + ATP = L-phenylalanyl-tRNA(Phe) + AMP + diphosphate + H(+). The protein is Phenylalanine--tRNA ligase alpha subunit of Rhodospirillum centenum (strain ATCC 51521 / SW).